Here is a 685-residue protein sequence, read N- to C-terminus: Polyphosphate kinase (685 aa).

Position 45 (Asn45) interacts with ATP. The Mg(2+) site is built by Arg375 and Arg405. The Phosphohistidine intermediate role is filled by His435. 3 residues coordinate ATP: Tyr468, Arg564, and His592.

Belongs to the polyphosphate kinase 1 (PPK1) family. It depends on Mg(2+) as a cofactor. An intermediate of this reaction is the autophosphorylated ppk in which a phosphate is covalently linked to a histidine residue through a N-P bond.

It catalyses the reaction [phosphate](n) + ATP = [phosphate](n+1) + ADP. Its function is as follows. Catalyzes the reversible transfer of the terminal phosphate of ATP to form a long-chain polyphosphate (polyP). The sequence is that of Polyphosphate kinase from Neisseria meningitidis serogroup C (strain 053442).